A 453-amino-acid polypeptide reads, in one-letter code: Bifunctional protein GlmU (453 aa).

Residues 1-228 (MPHWAAVIMA…VHEALGINSR (228 aa)) form a pyrophosphorylase region. UDP-N-acetyl-alpha-D-glucosamine-binding positions include lysine 23, glutamine 73, 78–79 (GT), 100–102 (SGD), glycine 139, glutamate 153, asparagine 168, and asparagine 226. Aspartate 102 is a Mg(2+) binding site. Mg(2+) is bound at residue asparagine 226. The tract at residues 229-249 (AQLAAAEDVARQRILSYWMEE) is linker. Residues 250–453 (GVTIIDPRST…IENWVRNKKK (204 aa)) form an N-acetyltransferase region. Arginine 331 and lysine 349 together coordinate UDP-N-acetyl-alpha-D-glucosamine. The active-site Proton acceptor is histidine 361. UDP-N-acetyl-alpha-D-glucosamine contacts are provided by tyrosine 364 and asparagine 375. Residues alanine 378, 384-385 (NY), serine 403, alanine 421, and arginine 438 each bind acetyl-CoA.

It in the N-terminal section; belongs to the N-acetylglucosamine-1-phosphate uridyltransferase family. The protein in the C-terminal section; belongs to the transferase hexapeptide repeat family. In terms of assembly, homotrimer. Mg(2+) serves as cofactor.

It is found in the cytoplasm. It carries out the reaction alpha-D-glucosamine 1-phosphate + acetyl-CoA = N-acetyl-alpha-D-glucosamine 1-phosphate + CoA + H(+). The enzyme catalyses N-acetyl-alpha-D-glucosamine 1-phosphate + UTP + H(+) = UDP-N-acetyl-alpha-D-glucosamine + diphosphate. It functions in the pathway nucleotide-sugar biosynthesis; UDP-N-acetyl-alpha-D-glucosamine biosynthesis; N-acetyl-alpha-D-glucosamine 1-phosphate from alpha-D-glucosamine 6-phosphate (route II): step 2/2. The protein operates within nucleotide-sugar biosynthesis; UDP-N-acetyl-alpha-D-glucosamine biosynthesis; UDP-N-acetyl-alpha-D-glucosamine from N-acetyl-alpha-D-glucosamine 1-phosphate: step 1/1. Its pathway is bacterial outer membrane biogenesis; LPS lipid A biosynthesis. Functionally, catalyzes the last two sequential reactions in the de novo biosynthetic pathway for UDP-N-acetylglucosamine (UDP-GlcNAc). The C-terminal domain catalyzes the transfer of acetyl group from acetyl coenzyme A to glucosamine-1-phosphate (GlcN-1-P) to produce N-acetylglucosamine-1-phosphate (GlcNAc-1-P), which is converted into UDP-GlcNAc by the transfer of uridine 5-monophosphate (from uridine 5-triphosphate), a reaction catalyzed by the N-terminal domain. This Desulfitobacterium hafniense (strain Y51) protein is Bifunctional protein GlmU.